Consider the following 305-residue polypeptide: tRNA dimethylallyltransferase (305 aa).

11-18 (GPTAVGKT) contacts ATP. 13-18 (TAVGKT) contacts substrate. The interaction with substrate tRNA stretch occupies residues 36–39 (DSMQ).

It belongs to the IPP transferase family. Monomer. Mg(2+) is required as a cofactor.

The enzyme catalyses adenosine(37) in tRNA + dimethylallyl diphosphate = N(6)-dimethylallyladenosine(37) in tRNA + diphosphate. In terms of biological role, catalyzes the transfer of a dimethylallyl group onto the adenine at position 37 in tRNAs that read codons beginning with uridine, leading to the formation of N6-(dimethylallyl)adenosine (i(6)A). In Listeria monocytogenes serotype 4a (strain HCC23), this protein is tRNA dimethylallyltransferase.